Consider the following 321-residue polypeptide: Phosphatidate cytidylyltransferase, mitochondrial (321 aa).

Belongs to the TAM41 family. It depends on Mg(2+) as a cofactor. The cofactor is Co(2+). Cu(2+) serves as cofactor.

It is found in the mitochondrion inner membrane. It carries out the reaction a 1,2-diacyl-sn-glycero-3-phosphate + CTP + H(+) = a CDP-1,2-diacyl-sn-glycerol + diphosphate. Its pathway is phospholipid metabolism; CDP-diacylglycerol biosynthesis; CDP-diacylglycerol from sn-glycerol 3-phosphate: step 3/3. Catalyzes the formation of CDP-diacylglycerol (CDP-DAG) from phosphatidic acid (PA) in the mitochondrial inner membrane. Required for the biosynthesis of the dimeric phospholipid cardiolipin, which stabilizes supercomplexes of the mitochondrial respiratory chain in the mitochondrial inner membrane. This Caenorhabditis briggsae protein is Phosphatidate cytidylyltransferase, mitochondrial.